We begin with the raw amino-acid sequence, 333 residues long: Putative fimbrium anchoring subunit Fim4B (333 aa).

A signal peptide spans 1–20 (MRNTRYGFLVLLSSLLMLTG). A lipid anchor (N-palmitoyl cysteine) is attached at Cys21. Cys21 is lipidated: S-diacylglycerol cysteine. The interval 274–333 (ENAGTGEDGKPTPPPEIELPPDDKIEVDKPETPPNPDGGGGMGGNVDGWGPEDNVELPVN) is disordered. The span at 294–304 (PDDKIEVDKPE) shows a compositional bias: basic and acidic residues. The segment covering 310–320 (DGGGGMGGNVD) has biased composition (gly residues).

It belongs to the bacteroidetes fimbrillin superfamily. FimB/Mfa2 family.

It localises to the cell outer membrane. In terms of biological role, putative fimbrium anchoring subunit. This is Putative fimbrium anchoring subunit Fim4B from Bacteroides ovatus (strain ATCC 8483 / DSM 1896 / JCM 5824 / BCRC 10623 / CCUG 4943 / NCTC 11153).